We begin with the raw amino-acid sequence, 418 residues long: Putative ion-transport protein YfeO (418 aa).

Helical transmembrane passes span 10–30, 54–74, 99–119, 120–140, 149–169, 186–206, 223–243, 258–278, 300–320, 322–342, 343–363, and 371–391; these read LLLS…LIVV, DSPF…GLVI, ALLG…SLGP, EHPI…RLLP, ILAS…AALI, LFAP…FFHP, ILSG…AVWC, VLVL…GGPV, DYFL…ASGF, GGRI…LHEH, VPAV…VLVV, and LFMA…CIVM.

Belongs to the chloride channel (TC 2.A.49) family.

Its subcellular location is the cell membrane. This Escherichia coli O17:K52:H18 (strain UMN026 / ExPEC) protein is Putative ion-transport protein YfeO.